The sequence spans 264 residues: Myozenin-2 (264 aa).

The residue at position 53 (Arg-53) is an Omega-N-methylarginine. The tract at residues 98 to 134 (ESGSQQAPFTPPNTPDPRSPPNPENIAPGYSGPLKEI) is disordered. Phosphoserine is present on Ser-101. Pro residues predominate over residues 106-120 (FTPPNTPDPRSPPNP). Phosphothreonine is present on residues Thr-107 and Thr-111. Ser-116 carries the post-translational modification Phosphoserine.

It belongs to the myozenin family. As to quaternary structure, interacts via its C-terminus with spectrin repeats 3 and 4 of ACTN2. Interacts with ACTN1, LDB3, MYOT and PPP3CA.

Its subcellular location is the cytoplasm. The protein localises to the myofibril. It is found in the sarcomere. It localises to the z line. In terms of biological role, myozenins may serve as intracellular binding proteins involved in linking Z line proteins such as alpha-actinin, gamma-filamin, TCAP/telethonin, LDB3/ZASP and localizing calcineurin signaling to the sarcomere. Plays an important role in the modulation of calcineurin signaling. May play a role in myofibrillogenesis. The polypeptide is Myozenin-2 (MYOZ2) (Bos taurus (Bovine)).